A 96-amino-acid polypeptide reads, in one-letter code: Large ribosomal subunit protein uL23 (96 aa).

It belongs to the universal ribosomal protein uL23 family. In terms of assembly, part of the 50S ribosomal subunit. Contacts protein L29, and trigger factor when it is bound to the ribosome.

One of the early assembly proteins it binds 23S rRNA. One of the proteins that surrounds the polypeptide exit tunnel on the outside of the ribosome. Forms the main docking site for trigger factor binding to the ribosome. The sequence is that of Large ribosomal subunit protein uL23 from Bacillus cereus (strain ATCC 10987 / NRS 248).